A 651-amino-acid polypeptide reads, in one-letter code: BTB/POZ domain-containing protein At3g44820 (651 aa).

Residues 25–96 (SDITVVVDDV…CYGARVDITS (72 aa)) enclose the BTB domain. In terms of domain architecture, NPH3 spans 211–509 (DWWYEDISYL…LQVLFFEQMH (299 aa)). The segment at 611–651 (DAKNDTVQNSVSSTPRSATADHTLPRSSRHSKHRKSFSFFG) is disordered. Over residues 615–627 (DTVQNSVSSTPRS) the composition is skewed to polar residues. Positions 637 to 651 (SSRHSKHRKSFSFFG) are enriched in basic residues.

Belongs to the NPH3 family.

It participates in protein modification; protein ubiquitination. Functionally, may act as a substrate-specific adapter of an E3 ubiquitin-protein ligase complex (CUL3-RBX1-BTB) which mediates the ubiquitination and subsequent proteasomal degradation of target proteins. The chain is BTB/POZ domain-containing protein At3g44820 from Arabidopsis thaliana (Mouse-ear cress).